Consider the following 604-residue polypeptide: Putative JmjC domain-containing protein L887 (604 aa).

Positions 1–127 (MNNMKKIIII…PNNKLNLIQP (127 aa)) constitute a JmjC domain. A helical transmembrane segment spans residues 4–24 (MKKIIIISIIIIIIIVLLFYI).

It localises to the membrane. The sequence is that of Putative JmjC domain-containing protein L887 from Acanthamoeba polyphaga (Amoeba).